The primary structure comprises 23 residues: Aurein-4.4 (23 aa).

The protein belongs to the frog skin active peptide (FSAP) family. Aurein subfamily. Expressed by the skin dorsal glands.

The protein resides in the secreted. Has no antimicrobial or anticancer activity. In Ranoidea aurea (Green and golden bell frog), this protein is Aurein-4.4.